Consider the following 860-residue polypeptide: Ubiquitin fusion degradation protein 3 homolog (860 aa).

6 WD repeats span residues 27–65 (AHKS…YTKT), 71–112 (PKGI…PYAI), 115–154 (EHKQ…SSSF), 163–203 (GHTL…SVFK), 204–242 (GHTD…ILRK), and 244–283 (ATQA…DGNL). The 101-residue stretch at 397–497 (PIHYLEEITR…DKLSKGAASA (101 aa)) folds into the PFU domain. The interval 494–585 (AASAQSGYED…LPQNKKKPRG (92 aa)) is disordered. In terms of domain architecture, PUL spans 586 to 856 (PLVPVPDFYI…KNIARDIVEM (271 aa)).

Belongs to the WD repeat PLAP family. Interacts with cdc-48.1. Expressed in intestine (at protein level).

Its subcellular location is the cytoplasm. In terms of biological role, plays a role in protein ubiquitination, sorting and degradation through its association with cdc-48.1 and/or cdc-48.2. The protein is Ubiquitin fusion degradation protein 3 homolog of Caenorhabditis elegans.